The following is a 94-amino-acid chain: Large ribosomal subunit protein uL23 (94 aa).

The protein belongs to the universal ribosomal protein uL23 family. As to quaternary structure, part of the 50S ribosomal subunit. Contacts protein L29, and trigger factor when it is bound to the ribosome.

One of the early assembly proteins it binds 23S rRNA. One of the proteins that surrounds the polypeptide exit tunnel on the outside of the ribosome. Forms the main docking site for trigger factor binding to the ribosome. The polypeptide is Large ribosomal subunit protein uL23 (Lysinibacillus sphaericus (strain C3-41)).